The sequence spans 227 residues: Phosphoglycolate phosphatase (227 aa).

The Nucleophile role is filled by aspartate 8. 2 residues coordinate Mg(2+): aspartate 8 and aspartate 10. Substrate is bound at residue lysine 150. 2 residues coordinate Mg(2+): aspartate 173 and aspartate 177.

Belongs to the archaeal SPP-like hydrolase family. It depends on Mg(2+) as a cofactor.

It catalyses the reaction 2-phosphoglycolate + H2O = glycolate + phosphate. Catalyzes the dephosphorylation of 2-phosphoglycolate. The chain is Phosphoglycolate phosphatase from Sulfolobus acidocaldarius (strain ATCC 33909 / DSM 639 / JCM 8929 / NBRC 15157 / NCIMB 11770).